A 219-amino-acid polypeptide reads, in one-letter code: Kynurenine formamidase (219 aa).

Trp-28 contributes to the substrate binding site. Zn(2+) contacts are provided by His-58, His-62, and Asp-64. The active-site Proton donor/acceptor is the His-68. His-170 and Glu-182 together coordinate Zn(2+).

Belongs to the Cyclase 1 superfamily. KynB family. As to quaternary structure, homodimer. It depends on Zn(2+) as a cofactor.

The enzyme catalyses N-formyl-L-kynurenine + H2O = L-kynurenine + formate + H(+). It participates in amino-acid degradation; L-tryptophan degradation via kynurenine pathway; L-kynurenine from L-tryptophan: step 2/2. Its function is as follows. Catalyzes the hydrolysis of N-formyl-L-kynurenine to L-kynurenine, the second step in the kynurenine pathway of tryptophan degradation. The sequence is that of Kynurenine formamidase from Cupriavidus pinatubonensis (strain JMP 134 / LMG 1197) (Cupriavidus necator (strain JMP 134)).